A 577-amino-acid polypeptide reads, in one-letter code: Scoloptoxin SSD14 (577 aa).

Positions 1–25 (MGTSYRKLGYVLFLMLGMIVEEGIA) are cleaved as a signal peptide.

As to quaternary structure, heterodimer composed of subunits alpha and beta; probably disulfide-linked. In terms of tissue distribution, expressed by the venom gland.

The protein localises to the secreted. Dose-dependently induces human platelet aggregation on both plasma rich platelet and washed platelet (max. response at 3.2 ug/mL) and causes hemolysis against mouse and rabbit erythrocytes (35 and 65% respectively at 5 ug/mL). Does not show hemolytic activity against human erythrocytes (even at 100 ug/mL). This is Scoloptoxin SSD14 from Scolopendra dehaani (Thai centipede).